The chain runs to 195 residues: Large ribosomal subunit protein uL18 (195 aa).

Belongs to the universal ribosomal protein uL18 family. Part of the 50S ribosomal subunit. Contacts the 5S and 23S rRNAs.

In terms of biological role, this is one of the proteins that bind and probably mediate the attachment of the 5S RNA into the large ribosomal subunit, where it forms part of the central protuberance. This is Large ribosomal subunit protein uL18 from Methanocaldococcus jannaschii (strain ATCC 43067 / DSM 2661 / JAL-1 / JCM 10045 / NBRC 100440) (Methanococcus jannaschii).